We begin with the raw amino-acid sequence, 159 residues long: Dihydrofolate reductase (159 aa).

Positions 1 to 158 constitute a DHFR domain; the sequence is MISLIAALAV…HSYCFEILER (158 aa). Isoleucine 5 serves as a coordination point for substrate. NADP(+)-binding positions include alanine 7 and 13-19; that span reads VIGMENA. Aspartate 27 provides a ligand contact to substrate. 45–46 lines the NADP(+) pocket; that stretch reads LT. The substrate site is built by arginine 52 and arginine 57. NADP(+) is bound by residues 63 to 64, lysine 76, and 95 to 102; these read SS and GGGRVYEQ. Threonine 113 provides a ligand contact to substrate.

The protein belongs to the dihydrofolate reductase family.

The enzyme catalyses (6S)-5,6,7,8-tetrahydrofolate + NADP(+) = 7,8-dihydrofolate + NADPH + H(+). The protein operates within cofactor biosynthesis; tetrahydrofolate biosynthesis; 5,6,7,8-tetrahydrofolate from 7,8-dihydrofolate: step 1/1. Functionally, key enzyme in folate metabolism. Catalyzes an essential reaction for de novo glycine and purine synthesis, and for DNA precursor synthesis. The polypeptide is Dihydrofolate reductase (folA) (Klebsiella aerogenes (Enterobacter aerogenes)).